Here is a 539-residue protein sequence, read N- to C-terminus: Probable transcription factor GLK2 (539 aa).

Positions 86–218 are disordered; it reads FASSPDDEPP…NSHGKRKVKV (133 aa). Composition is skewed to low complexity over residues 99 to 111 and 121 to 130; these read SAPG…AAAG and AAAAAAAAAA. Over residues 144–161 the composition is skewed to basic and acidic residues; sequence KKDDEERSSSLPEEKDAK. The HTH myb-type domain occupies 212–271; that stretch reads GKRKVKVDWTPELHRRFVQAVEQLGIDKAVPSRILELMGIECLTRHNIASHLQKYRSHRK. Residues 242-267 constitute a DNA-binding region (H-T-H motif); sequence PSRILELMGIECLTRHNIASHLQKYR.

In terms of tissue distribution, expressed in leaves.

It is found in the nucleus. Probable transcriptional activator that promotes chloroplast development. Acts as an activator of nuclear photosynthetic genes involved in chlorophyll biosynthesis, light harvesting, and electron transport. The protein is Probable transcription factor GLK2 (GLK2) of Oryza sativa subsp. japonica (Rice).